We begin with the raw amino-acid sequence, 123 residues long: Large ribosomal subunit protein bL20 (123 aa).

It belongs to the bacterial ribosomal protein bL20 family.

In terms of biological role, binds directly to 23S ribosomal RNA and is necessary for the in vitro assembly process of the 50S ribosomal subunit. It is not involved in the protein synthesizing functions of that subunit. The chain is Large ribosomal subunit protein bL20 from Chlamydia trachomatis serovar L2b (strain UCH-1/proctitis).